The primary structure comprises 402 residues: Nodulation protein E (402 aa).

The region spanning D2 to Q401 is the Ketosynthase family 3 (KS3) domain. Active-site for beta-ketoacyl synthase activity residues include C162, H294, and H331. The chain crosses the membrane as a helical span at residues H329–I348.

It belongs to the thiolase-like superfamily. Beta-ketoacyl-ACP synthases family.

The protein localises to the cell inner membrane. Proposed to synthesize NOD factor fatty acyl chain. Involved in the synthesis of a highly unsaturated fatty acid moiety, which forms part of a lipo-oligosaccharide that is responsible for host specificity. The polypeptide is Nodulation protein E (nodE) (Rhizobium meliloti (strain 1021) (Ensifer meliloti)).